The sequence spans 195 residues: Orotate phosphoribosyltransferase (195 aa).

5-phospho-alpha-D-ribose 1-diphosphate contacts are provided by residues Arg-86, Lys-90, His-92, and 111–119 (DDVATTGVS). The orotate site is built by Thr-115 and Arg-143.

This sequence belongs to the purine/pyrimidine phosphoribosyltransferase family. PyrE subfamily. In terms of assembly, homodimer. It depends on Mg(2+) as a cofactor.

The enzyme catalyses orotidine 5'-phosphate + diphosphate = orotate + 5-phospho-alpha-D-ribose 1-diphosphate. It functions in the pathway pyrimidine metabolism; UMP biosynthesis via de novo pathway; UMP from orotate: step 1/2. In terms of biological role, catalyzes the transfer of a ribosyl phosphate group from 5-phosphoribose 1-diphosphate to orotate, leading to the formation of orotidine monophosphate (OMP). The protein is Orotate phosphoribosyltransferase of Saccharolobus solfataricus (strain ATCC 35092 / DSM 1617 / JCM 11322 / P2) (Sulfolobus solfataricus).